The primary structure comprises 461 residues: Anthocyanidin 3-O-glucoside 5-O-glucosyltransferase (461 aa).

Positions 1 to 15 are cleaved as a signal peptide; that stretch reads MSRAHVLLATFPAQG. Catalysis depends on H16, which acts as the Proton acceptor. H16 contributes to the an anthocyanidin binding site. UDP-alpha-D-glucose is bound by residues Q338, H353, W356, N357, S358, E361, D377, and Q378.

It belongs to the UDP-glycosyltransferase family.

The enzyme catalyses an anthocyanidin 3-O-beta-D-glucoside + UDP-alpha-D-glucose = an anthocyanidin 3,5-di-O-beta-D-glucoside + UDP + 2 H(+). It functions in the pathway pigment biosynthesis; anthocyanin biosynthesis. Its function is as follows. Catalyzes the glucosylation at the O-5 position of anthocyanidin 3-glucosides to form anthocyanidin 3,5-di-O-glucosides using UDP-glucose as sugar donor. Anthocyanidin 3,5-di-O-glucosides are molecules that are responsible for pigmentation. Also acts on anthocyanidin 3-O-(6-O-malonylglucoside). Much less active with hydroxycinnamoylglucose derivatives. No activity in the absence of the 3-O-glucoside group. The chain is Anthocyanidin 3-O-glucoside 5-O-glucosyltransferase (HGT8) from Verbena hybrida (Garden vervain).